A 212-amino-acid chain; its full sequence is Protein HP-25 homolog 1 (212 aa).

Residues 1 to 34 (MPGGRRRVGSMNIAGFWILAQFVLLLVANVKSSA) form the signal peptide. The disordered stretch occupies residues 36–66 (SELCGPRGARGPPGLSGLPGPPGYTGPIGMP). A compositionally biased stretch (low complexity) spans 40-53 (GPRGARGPPGLSGL). In terms of domain architecture, Collagen-like spans 40 to 76 (GPRGARGPPGLSGLPGPPGYTGPIGMPGLTGRPGLPG). In terms of domain architecture, C1q spans 82–212 (PPLPQSAFSV…VFYGFLLNGN (131 aa)). Residue asparagine 125 is glycosylated (N-linked (GlcNAc...) asparagine).

Its subcellular location is the secreted. This is Protein HP-25 homolog 1 from Bos taurus (Bovine).